The chain runs to 88 residues: Small ribosomal subunit protein uS15 (88 aa).

It belongs to the universal ribosomal protein uS15 family. In terms of assembly, part of the 30S ribosomal subunit. Forms a bridge to the 50S subunit in the 70S ribosome, contacting the 23S rRNA.

Functionally, one of the primary rRNA binding proteins, it binds directly to 16S rRNA where it helps nucleate assembly of the platform of the 30S subunit by binding and bridging several RNA helices of the 16S rRNA. Its function is as follows. Forms an intersubunit bridge (bridge B4) with the 23S rRNA of the 50S subunit in the ribosome. The protein is Small ribosomal subunit protein uS15 of Mycoplasmopsis synoviae (strain 53) (Mycoplasma synoviae).